Here is a 389-residue protein sequence, read N- to C-terminus: Dual-specificity RNA methyltransferase RlmN (389 aa).

Residue E110 is the Proton acceptor of the active site. One can recognise a Radical SAM core domain in the interval 116-355 (EKDRATLCVS…TIVRKTRGDD (240 aa)). C123 and C360 are oxidised to a cystine. [4Fe-4S] cluster contacts are provided by C130, C134, and C137. S-adenosyl-L-methionine-binding positions include 184–185 (GE), S216, 238–240 (SLH), and N317. C360 serves as the catalytic S-methylcysteine intermediate.

This sequence belongs to the radical SAM superfamily. RlmN family. The cofactor is [4Fe-4S] cluster.

Its subcellular location is the cytoplasm. The catalysed reaction is adenosine(2503) in 23S rRNA + 2 reduced [2Fe-2S]-[ferredoxin] + 2 S-adenosyl-L-methionine = 2-methyladenosine(2503) in 23S rRNA + 5'-deoxyadenosine + L-methionine + 2 oxidized [2Fe-2S]-[ferredoxin] + S-adenosyl-L-homocysteine. The enzyme catalyses adenosine(37) in tRNA + 2 reduced [2Fe-2S]-[ferredoxin] + 2 S-adenosyl-L-methionine = 2-methyladenosine(37) in tRNA + 5'-deoxyadenosine + L-methionine + 2 oxidized [2Fe-2S]-[ferredoxin] + S-adenosyl-L-homocysteine. Specifically methylates position 2 of adenine 2503 in 23S rRNA and position 2 of adenine 37 in tRNAs. m2A2503 modification seems to play a crucial role in the proofreading step occurring at the peptidyl transferase center and thus would serve to optimize ribosomal fidelity. The sequence is that of Dual-specificity RNA methyltransferase RlmN from Erwinia tasmaniensis (strain DSM 17950 / CFBP 7177 / CIP 109463 / NCPPB 4357 / Et1/99).